Here is a 536-residue protein sequence, read N- to C-terminus: Chaperonin GroEL 1 (536 aa).

Residues 29–32 (TLGP), 86–90 (DGTTT), glycine 413, 476–478 (NAA), and aspartate 492 contribute to the ATP site.

The protein belongs to the chaperonin (HSP60) family. In terms of assembly, forms a cylinder of 14 subunits composed of two heptameric rings stacked back-to-back. Interacts with the co-chaperonin GroES.

The protein resides in the cytoplasm. It carries out the reaction ATP + H2O + a folded polypeptide = ADP + phosphate + an unfolded polypeptide.. In terms of biological role, together with its co-chaperonin GroES, plays an essential role in assisting protein folding. The GroEL-GroES system forms a nano-cage that allows encapsulation of the non-native substrate proteins and provides a physical environment optimized to promote and accelerate protein folding. The protein is Chaperonin GroEL 1 of Nocardia farcinica (strain IFM 10152).